A 211-amino-acid polypeptide reads, in one-letter code: B3 domain-containing protein At5g42700 (211 aa).

A DNA-binding region (TF-B3) is located at residues 110 to 201 (FVKSMLQSHV…AFKVYITRVG (92 aa)).

It localises to the nucleus. The chain is B3 domain-containing protein At5g42700 from Arabidopsis thaliana (Mouse-ear cress).